Here is an 84-residue protein sequence, read N- to C-terminus: Toxin CsE9 (84 aa).

An N-terminal signal peptide occupies residues 1–19; sequence MNSLLMITTCLILIGTVLA. Positions 20–83 constitute an LCN-type CS-alpha/beta domain; that stretch reads EDGYLFDKRK…ISRTPGKTCK (64 aa). Cystine bridges form between Cys31-Cys82, Cys35-Cys58, Cys44-Cys63, and Cys48-Cys65.

Belongs to the long (4 C-C) scorpion toxin superfamily. Sodium channel inhibitor family. Beta subfamily. As to expression, expressed by the venom gland.

The protein localises to the secreted. Functionally, beta toxins bind voltage-independently at site-4 of sodium channels (Nav) and shift the voltage of activation toward more negative potentials thereby affecting sodium channel activation and promoting spontaneous and repetitive firing. This is Toxin CsE9 from Centruroides sculpturatus (Arizona bark scorpion).